The sequence spans 128 residues: Large ribosomal subunit protein bL17 (128 aa).

Belongs to the bacterial ribosomal protein bL17 family. Part of the 50S ribosomal subunit. Contacts protein L32.

The chain is Large ribosomal subunit protein bL17 from Pseudomonas fluorescens (strain ATCC BAA-477 / NRRL B-23932 / Pf-5).